Here is a 183-residue protein sequence, read N- to C-terminus: MTTASTSQVRQNYHQDSEAAINRQINLELYASYVYLSMSYYFDRDDVALKNFAKYFLHQSHEEREHAEKLMKLQNQRGGRIFLQDIKKPDCDDWESGLNAMECALHLEKNVNQSLLELHKLATDKNDPHLCDFIETHYLNEQVKAIKELGDHVTNLRKMGAPESGLAEYLFDKHTLGDSDNES.

At methionine 1 the chain carries N-acetylmethionine. Threonine 2 is modified (N-acetylthreonine; in Ferritin heavy chain, N-terminally processed). A Ferritin-like diiron domain is found at 11–160 (QNYHQDSEAA…DHVTNLRKMG (150 aa)). Fe cation is bound by residues glutamate 28, glutamate 63, histidine 66, glutamate 108, and glutamine 142. Phosphoserine is present on residues serine 179 and serine 183.

This sequence belongs to the ferritin family. Oligomer of 24 subunits. There are two types of subunits: L (light) chain and H (heavy) chain. The major chain can be light or heavy, depending on the species and tissue type. In the human liver, the heavy chain is predominant. The functional molecule forms a roughly spherical shell with a diameter of 12 nm and contains a central cavity into which the insoluble mineral iron core is deposited. Interacts with NCOA4; NCOA4 promotes targeting of the iron-binding ferritin complex to autolysosomes following starvation or iron depletion. As to expression, expressed in the liver.

The protein localises to the cytoplasm. Its subcellular location is the lysosome. It localises to the cytoplasmic vesicle. It is found in the autophagosome. It carries out the reaction 4 Fe(2+) + O2 + 4 H(+) = 4 Fe(3+) + 2 H2O. Functionally, stores iron in a soluble, non-toxic, readily available form. Important for iron homeostasis. Has ferroxidase activity. Iron is taken up in the ferrous form and deposited as ferric hydroxides after oxidation. Also plays a role in delivery of iron to cells. Mediates iron uptake in capsule cells of the developing kidney. Delivery to lysosomes is mediated by the cargo receptor NCOA4 for autophagic degradation and release of iron. The chain is Ferritin heavy chain (FTH1) from Homo sapiens (Human).